The sequence spans 536 residues: Glycine--tRNA ligase (536 aa).

An insert region spans residues 56–67 (LVSPAGAPSTFE). Substrate contacts are provided by Arg106 and Glu213. Residues 245–247 (RNE), 255–260 (FRSREF), and 333–334 (EL) each bind ATP. Residue 260–264 (FEQME) participates in substrate binding. Residues 350-372 (EGKLDPATNPMTVELNEHGKPKH) are insert. 396–400 (EPSAG) provides a ligand contact to substrate. 400–403 (GADR) lines the ATP pocket.

It belongs to the class-II aminoacyl-tRNA synthetase family. In terms of assembly, homodimer.

The protein localises to the cytoplasm. It catalyses the reaction tRNA(Gly) + glycine + ATP = glycyl-tRNA(Gly) + AMP + diphosphate. In terms of biological role, catalyzes the attachment of glycine to tRNA(Gly). This is Glycine--tRNA ligase from Rhodopirellula baltica (strain DSM 10527 / NCIMB 13988 / SH1).